The following is a 216-amino-acid chain: Octanoyltransferase (216 aa).

The region spanning 32 to 211 (QEASEMLWFL…RFPYFLEALQ (180 aa)) is the BPL/LPL catalytic domain. Substrate is bound by residues 71–78 (RGGRYTYH), 142–144 (AIG), and 155–157 (GFS). Cysteine 173 acts as the Acyl-thioester intermediate in catalysis.

It belongs to the LipB family.

The protein localises to the cytoplasm. The catalysed reaction is octanoyl-[ACP] + L-lysyl-[protein] = N(6)-octanoyl-L-lysyl-[protein] + holo-[ACP] + H(+). The protein operates within protein modification; protein lipoylation via endogenous pathway; protein N(6)-(lipoyl)lysine from octanoyl-[acyl-carrier-protein]: step 1/2. Functionally, catalyzes the transfer of endogenously produced octanoic acid from octanoyl-acyl-carrier-protein onto the lipoyl domains of lipoate-dependent enzymes. Lipoyl-ACP can also act as a substrate although octanoyl-ACP is likely to be the physiological substrate. The protein is Octanoyltransferase of Zymomonas mobilis subsp. mobilis (strain ATCC 31821 / ZM4 / CP4).